The chain runs to 512 residues: Peroxisomal N(1)-acetyl-spermine/spermidine oxidase (512 aa).

Residue Met1 is modified to N-acetylmethionine. Positions 1–6 (MQSGGR) are excised as a propeptide. FAD-binding positions include Ala25, Glu46, Arg54, and 70-71 (HW). 2 residues coordinate substrate: His73 and Val195. Val248 is a binding site for FAD. Asn321 contributes to the substrate binding site. Residues Glu473 and 482–483 (TT) contribute to the FAD site. The short motif at 510 to 512 (PRL) is the Microbody targeting signal element.

Belongs to the flavin monoamine oxidase family. In terms of assembly, monomer. FAD serves as cofactor.

It localises to the peroxisome. Its subcellular location is the cytoplasm. It carries out the reaction N(1)-acetylspermine + O2 + H2O = 3-acetamidopropanal + spermidine + H2O2. It catalyses the reaction N(1)-acetylspermidine + O2 + H2O = 3-acetamidopropanal + putrescine + H2O2. The enzyme catalyses N(1),N(12)-diacetylspermine + O2 + H2O = 3-acetamidopropanal + N(1)-acetylspermidine + H2O2. The protein operates within amine and polyamine metabolism; spermine metabolism. In terms of biological role, flavoenzyme which catalyzes the oxidation of N(1)-acetylspermine to spermidine and is thus involved in the polyamine back-conversion. Can also oxidize N(1)-acetylspermidine to putrescine. Substrate specificity: N(1)-acetylspermine = N(1)-acetylspermidine &gt; N(1),N(12)-diacylspermine &gt;&gt; spermine. Does not oxidize spermidine. Plays an important role in the regulation of polyamine intracellular concentration. The chain is Peroxisomal N(1)-acetyl-spermine/spermidine oxidase (PAOX) from Bos taurus (Bovine).